A 296-amino-acid polypeptide reads, in one-letter code: Probable transcription factor At1g44810 (296 aa).

The tract at residues 1 to 119 (MNKKLLNPLE…AKKVSGDDDN (119 aa)) is disordered. Positions 19–28 (EDVDEEISSG) are enriched in acidic residues. The span at 52 to 72 (TQTLNSPSTEAPTLDSGSETN) shows a compositional bias: polar residues. The span at 97–119 (RASEGTSSKDIKRAKKVSGDDDN) shows a compositional bias: basic and acidic residues.

This sequence belongs to the GeBP family.

The chain is Probable transcription factor At1g44810 from Arabidopsis thaliana (Mouse-ear cress).